Reading from the N-terminus, the 377-residue chain is Chaperone protein DnaJ (377 aa).

One can recognise a J domain in the interval 5-70 (DYYEVLGVSR…DKKAAYDQFG (66 aa)). A CR-type zinc finger spans residues 133–211 (GLTKELRIPT…CHGDGRVEKS (79 aa)). Zn(2+) is bound by residues Cys-146, Cys-149, Cys-163, Cys-166, Cys-185, Cys-188, Cys-199, and Cys-202. CXXCXGXG motif repeat units follow at residues 146-153 (CDLCEGSG), 163-170 (CGTCHGQG), 185-192 (CPTCHGRG), and 199-206 (CTKCHGDG).

This sequence belongs to the DnaJ family. In terms of assembly, homodimer. The cofactor is Zn(2+).

The protein localises to the cytoplasm. In terms of biological role, participates actively in the response to hyperosmotic and heat shock by preventing the aggregation of stress-denatured proteins and by disaggregating proteins, also in an autonomous, DnaK-independent fashion. Unfolded proteins bind initially to DnaJ; upon interaction with the DnaJ-bound protein, DnaK hydrolyzes its bound ATP, resulting in the formation of a stable complex. GrpE releases ADP from DnaK; ATP binding to DnaK triggers the release of the substrate protein, thus completing the reaction cycle. Several rounds of ATP-dependent interactions between DnaJ, DnaK and GrpE are required for fully efficient folding. Also involved, together with DnaK and GrpE, in the DNA replication of plasmids through activation of initiation proteins. This chain is Chaperone protein DnaJ, found in Shewanella baltica (strain OS223).